The following is a 283-amino-acid chain: 4-hydroxy-tetrahydrodipicolinate synthase (283 aa).

Position 46 (threonine 46) interacts with pyruvate. Tyrosine 134 serves as the catalytic Proton donor/acceptor. Lysine 162 functions as the Schiff-base intermediate with substrate in the catalytic mechanism. Residue isoleucine 208 coordinates pyruvate.

This sequence belongs to the DapA family. In terms of assembly, homotetramer; dimer of dimers.

The protein resides in the cytoplasm. The enzyme catalyses L-aspartate 4-semialdehyde + pyruvate = (2S,4S)-4-hydroxy-2,3,4,5-tetrahydrodipicolinate + H2O + H(+). The protein operates within amino-acid biosynthesis; L-lysine biosynthesis via DAP pathway; (S)-tetrahydrodipicolinate from L-aspartate: step 3/4. Catalyzes the condensation of (S)-aspartate-beta-semialdehyde [(S)-ASA] and pyruvate to 4-hydroxy-tetrahydrodipicolinate (HTPA). This Methanothermobacter thermautotrophicus (strain ATCC 29096 / DSM 1053 / JCM 10044 / NBRC 100330 / Delta H) (Methanobacterium thermoautotrophicum) protein is 4-hydroxy-tetrahydrodipicolinate synthase.